Reading from the N-terminus, the 255-residue chain is Ribonuclease HII (255 aa).

One can recognise an RNase H type-2 domain in the interval 72–255; sequence AIICGIDEVG…KSFEPIKSLL (184 aa). Positions 78, 79, and 170 each coordinate a divalent metal cation.

It belongs to the RNase HII family. Mn(2+) serves as cofactor. The cofactor is Mg(2+).

It localises to the cytoplasm. The catalysed reaction is Endonucleolytic cleavage to 5'-phosphomonoester.. Its function is as follows. Endonuclease that specifically degrades the RNA of RNA-DNA hybrids. The sequence is that of Ribonuclease HII from Staphylococcus aureus (strain USA300).